Consider the following 173-residue polypeptide: MAIILGVDPGSRITGYGVINCVGRQQVYVGSGCIRTSSDELPLRLKQIFDGLSEIIRQYQPDEFAIERVFMAKNADSALKLGQARGAAIVAATAANLPVAEYSATQIKSAVVGTGRAQKSQVQHMIQQLLKLPSAPQADAADALGVAVCHYHTNQSLAAMGGRANSRTYGRYK.

Residues Asp-8, Glu-67, and Asp-139 contribute to the active site. 3 residues coordinate Mg(2+): Asp-8, Glu-67, and Asp-139.

Belongs to the RuvC family. In terms of assembly, homodimer which binds Holliday junction (HJ) DNA. The HJ becomes 2-fold symmetrical on binding to RuvC with unstacked arms; it has a different conformation from HJ DNA in complex with RuvA. In the full resolvosome a probable DNA-RuvA(4)-RuvB(12)-RuvC(2) complex forms which resolves the HJ. Requires Mg(2+) as cofactor.

Its subcellular location is the cytoplasm. It catalyses the reaction Endonucleolytic cleavage at a junction such as a reciprocal single-stranded crossover between two homologous DNA duplexes (Holliday junction).. In terms of biological role, the RuvA-RuvB-RuvC complex processes Holliday junction (HJ) DNA during genetic recombination and DNA repair. Endonuclease that resolves HJ intermediates. Cleaves cruciform DNA by making single-stranded nicks across the HJ at symmetrical positions within the homologous arms, yielding a 5'-phosphate and a 3'-hydroxyl group; requires a central core of homology in the junction. The consensus cleavage sequence is 5'-(A/T)TT(C/G)-3'. Cleavage occurs on the 3'-side of the TT dinucleotide at the point of strand exchange. HJ branch migration catalyzed by RuvA-RuvB allows RuvC to scan DNA until it finds its consensus sequence, where it cleaves and resolves the cruciform DNA. The sequence is that of Crossover junction endodeoxyribonuclease RuvC from Shewanella piezotolerans (strain WP3 / JCM 13877).